We begin with the raw amino-acid sequence, 538 residues long: MPIGNLGHNPNVRALIPPAPPLPSQTDGAGGARNQLINSNGPMGSRLLFTPIRNSVADAADSRASDIPGLPTNPLRFAASEVSLHGALEVLHDKGGLDTLNSAIGSSLFRVETRDDGSHVAIGQKNGLETTVVLSEQEFSSLQSLDPEGKNKFVFTGGRGGAGHAMVTVASDIAEARQRIIDKLEPKDTKETKEPGDPNSGEGKIIEIHTSTSTSSLRADPKLWLSLGTIAAGLIGMAATGIAQAVALTPEPDDPITTDPDAAANTAEAAAKDQLTKEAFQNPDNQKVNIDENGNAIPSGELKDDVVAQIAEQAKAAGEQARQEAIESNSQAQQKYDEQHAKREQEMSLSSGVGYGISGALILGGGIGAGVTAALHRKNQPAEQTITTRTVVDNQPTNNASAQGNTDTSGPEESPASRRNSNASLASNGSDTSSTGTVENPYADVGMPRNDSLARISEEPIYDEVAADPNYSVIQHFSGNSPVTGRLVGTPGQGIQSTYALLASSGGLRLGMGGLTGGGESAVSTANAAPTPGPARFV.

2 disordered regions span residues 1–37 and 184–204; these read MPIG…NQLI and LEPK…GEGK. Topologically, residues 1–222 are cytoplasmic; the sequence is MPIGNLGHNP…STSSLRADPK (222 aa). The segment covering 184–196 has biased composition (basic and acidic residues); that stretch reads LEPKDTKETKEPG. The helical transmembrane segment at 223–243 threads the bilayer; the sequence is LWLSLGTIAAGLIGMAATGIA. Residues 244 to 354 lie on the Extracellular side of the membrane; the sequence is QAVALTPEPD…QEMSLSSGVG (111 aa). 2 disordered regions span residues 279–299 and 313–347; these read AFQN…AIPS and QAKA…EQEM. Residues 335-346 show a composition bias toward basic and acidic residues; the sequence is KYDEQHAKREQE. The chain crosses the membrane as a helical span at residues 355-375; sequence YGISGALILGGGIGAGVTAAL. Over 376-538 the chain is Cytoplasmic; sequence HRKNQPAEQT…APTPGPARFV (163 aa). Residues 380–449 form a disordered region; the sequence is QPAEQTITTR…NPYADVGMPR (70 aa). Over residues 381–411 the composition is skewed to polar residues; it reads PAEQTITTRTVVDNQPTNNASAQGNTDTSGP. A compositionally biased stretch (low complexity) spans 417–430; the sequence is SRRNSNASLASNGS. An Essential for actin pedestal formation motif is present at residues 440–442; it reads NPY.

It belongs to the Tir receptor family. In terms of assembly, interacts with intimin and host proteins. Post-translationally, phosphorylated by host kinases.

The protein localises to the secreted. It localises to the host cell membrane. Multifunctional protein that is required for efficient pedestal formation in host epithelial cells during infection. The extracellular region acts as a receptor for bacterial intimin, allowing the bacterium to attach tightly to the host-cell surface. Simultaneously, the intracellular region initiates a signaling cascade in the host cell, which leads to actin polymerization and formation of actin pedestals at the sites of bacterial adhesion. This Escherichia coli protein is Translocated intimin receptor Tir (tir).